We begin with the raw amino-acid sequence, 418 residues long: MIFDKDDFKAYDADLWNAIAKEEERQQNNIELIASENVVSKAVMAAQGSILTNKYAEGYPGRRYYGGTDVVDVVETLAIERAKEIFGAKFANVQPHSGSQANCAAYMSLIEPGDTVMGMDLASGGHLTHGAPVSFSGQTYNFVSYSVDPETELLDFDAILKQAQEVKPKLIVAGASAYSQIIDFSKFREIADAVGAKLMVDMAHIAGLVAAGLHPSPVPYAHITTTTTHKTLRGPRGGLILTNDEELAKKINSAIFPGIQGGPLXHVVAAKAVSFKEVLDPAFKEYAANVIKNSKAMADVFLQDPDFRIISGGTENHLFLVDVTKVVENGKVAQNLLDEVNITLNKNSIPYESLSPFKTSGIRIGAAAITARGFGEEESRKVAELIIKTLKNSENEAVLEEVRSAVKELTDAFLLYED.

Residues L121 and G125–L127 each bind (6S)-5,6,7,8-tetrahydrofolate. K230 carries the N6-(pyridoxal phosphate)lysine modification. (6S)-5,6,7,8-tetrahydrofolate contacts are provided by residues E246 and S355 to F357.

It belongs to the SHMT family. As to quaternary structure, homodimer. Requires pyridoxal 5'-phosphate as cofactor.

It is found in the cytoplasm. It carries out the reaction (6R)-5,10-methylene-5,6,7,8-tetrahydrofolate + glycine + H2O = (6S)-5,6,7,8-tetrahydrofolate + L-serine. The protein operates within one-carbon metabolism; tetrahydrofolate interconversion. It participates in amino-acid biosynthesis; glycine biosynthesis; glycine from L-serine: step 1/1. In terms of biological role, catalyzes the reversible interconversion of serine and glycine with tetrahydrofolate (THF) serving as the one-carbon carrier. This reaction serves as the major source of one-carbon groups required for the biosynthesis of purines, thymidylate, methionine, and other important biomolecules. Also exhibits THF-independent aldolase activity toward beta-hydroxyamino acids, producing glycine and aldehydes, via a retro-aldol mechanism. In Streptococcus pneumoniae serotype 19F (strain G54), this protein is Serine hydroxymethyltransferase.